Consider the following 185-residue polypeptide: Large ribosomal subunit protein bL12c (185 aa).

The transit peptide at 1 to 47 (MASTALSSAFSLLSLPSSSSPAAAAAAAPRSFAVPSRARPRRAVAVV) directs the protein to the chloroplast.

Belongs to the bacterial ribosomal protein bL12 family.

The protein localises to the plastid. The protein resides in the chloroplast. In Oryza sativa subsp. japonica (Rice), this protein is Large ribosomal subunit protein bL12c (RPL12-2).